Reading from the N-terminus, the 193-residue chain is Resuscitation-promoting factor Rpf1 (193 aa).

The signal sequence occupies residues 1–35 (MGRHSTKTSSAFTKLAASTIAFGAAATIMAPSASA).

This sequence belongs to the transglycosylase family. Rpf subfamily.

Its subcellular location is the secreted. Its function is as follows. Factor that stimulates resuscitation of dormant cells. Has peptidoglycan (PG) hydrolytic activity. Active in the pM concentration range. Has little to no effect on actively-growing cells. PG fragments could either directly activate the resuscitation pathway of dormant bacteria or serve as a substrate for endogenous Rpf, resulting in low molecular weight products with resuscitation activity. The polypeptide is Resuscitation-promoting factor Rpf1 (rpf1) (Corynebacterium glutamicum (strain ATCC 13032 / DSM 20300 / JCM 1318 / BCRC 11384 / CCUG 27702 / LMG 3730 / NBRC 12168 / NCIMB 10025 / NRRL B-2784 / 534)).